The primary structure comprises 221 residues: Ribonuclease 3 (221 aa).

The RNase III domain occupies 1–123 (MERTGHAFAD…LIAVLYLDGG (123 aa)). A Mg(2+)-binding site is contributed by Glu-36. The active site involves Asp-40. Residues Asp-109 and Glu-112 each coordinate Mg(2+). Glu-112 is a catalytic residue. A DRBM domain is found at 148–217 (DAKTELQEWA…AAALLLREGV (70 aa)).

The protein belongs to the ribonuclease III family. In terms of assembly, homodimer. Mg(2+) serves as cofactor.

The protein resides in the cytoplasm. The catalysed reaction is Endonucleolytic cleavage to 5'-phosphomonoester.. In terms of biological role, digests double-stranded RNA. Involved in the processing of primary rRNA transcript to yield the immediate precursors to the large and small rRNAs (23S and 16S). Processes some mRNAs, and tRNAs when they are encoded in the rRNA operon. Processes pre-crRNA and tracrRNA of type II CRISPR loci if present in the organism. The chain is Ribonuclease 3 from Mesorhizobium japonicum (strain LMG 29417 / CECT 9101 / MAFF 303099) (Mesorhizobium loti (strain MAFF 303099)).